Here is a 194-residue protein sequence, read N- to C-terminus: Protein LKAAEAR1 (194 aa).

The disordered stretch occupies residues 1 to 45 (MPPPAKEGGRKGPRERSGKSAPGTAQGEERAKGAPATEPPKPGWA). The span at 7–18 (EGGRKGPRERSG) shows a compositional bias: basic and acidic residues.

In Homo sapiens (Human), this protein is Protein LKAAEAR1 (LKAAEAR1).